A 1976-amino-acid polypeptide reads, in one-letter code: DNA-directed RNA polymerase V subunit 1 (1976 aa).

Cysteine 57, cysteine 60, cysteine 68, histidine 71, cysteine 98, and cysteine 101 together coordinate Zn(2+). Mg(2+) contacts are provided by aspartate 449, aspartate 451, and aspartate 453. The bridging helix stretch occupies residues 751–763 (PYEEMAHSIAARE). Copy 1 of the repeat occupies 1215 to 1216 (WG). Positions 1215-1693 (WGKRVDVGTG…AKKFPSSGGW (479 aa)) are 18 X 2 AA repeats of [WG]-[GW] repeats. Disordered stretches follow at residues 1272–1291 (EEEM…LGEP), 1298–1718 (DFQN…EDNL), and 1847–1976 (FTKP…QTQT). Composition is skewed to basic and acidic residues over residues 1281 to 1291 (SPERDSALGEP) and 1298 to 1307 (DFQNLHDEGK). Copy 2 of the repeat occupies 1329-1330 (WG). Positions 1332–1348 (SKSTGGEANPESNWEKT) are enriched in polar residues. Residues 1349-1371 (TNVEKEDAWSSWNTRKDAQESSK) show a composition bias toward basic and acidic residues. 15 consecutive repeat copies span residues 1378–1379 (WG), 1415–1416 (WG), 1430–1431 (WG), 1439–1440 (WG), 1447–1448 (WG), 1464–1465 (WG), 1498–1499 (WG), 1528–1529 (WG), 1545–1546 (WG), 1562–1563 (WG), 1596–1597 (WG), 1604–1605 (WG), 1621–1622 (WG), 1638–1639 (WG), and 1641–1642 (WG). Basic and acidic residues predominate over residues 1415–1430 (WGHKSVSDKSWDKKNW). The span at 1491 to 1501 (TESNGATWGSS) shows a compositional bias: polar residues. The segment covering 1648–1678 (AEDKDTNEDDRNPWVSLKETKSREKDDKERS) has biased composition (basic and acidic residues). 2 consecutive repeat copies span residues 1680 to 1681 (WG) and 1692 to 1693 (GW). Residues 1869 to 1878 (EQSQPPNQSI) are compositionally biased toward polar residues. Over residues 1886–1976 (QTQTQSQSPS…SSQSPSQTQT (91 aa)) the composition is skewed to low complexity.

Belongs to the RNA polymerase beta' chain family. In terms of assembly, component of the RNA polymerase V complex. Interacts with NRPD4, NRPD2A, and (via C-terminus) with AGO4. Interacts with SUVH2. As to expression, mostly expressed in flowers, and, to a lower extent, in leaves. Present in sperm cells.

It localises to the nucleus. Its subcellular location is the nucleolus. The enzyme catalyses RNA(n) + a ribonucleoside 5'-triphosphate = RNA(n+1) + diphosphate. Its function is as follows. DNA-dependent RNA polymerase catalyzes the transcription of DNA into RNA using the four ribonucleoside triphosphates as substrates. Largest and catalytic component of RNA polymerase V involved in RNA-directed DNA methylation-dependent (RdDM) silencing of endogenous repeated sequences, including transposable elements. Also required for full erasure of methylation when the RNA trigger is withdrawn. Seems also involved in the synthesis of short-interfering RNAs (siRNA). Essential component of a self-reinforcing loop coupling de novo DNA methylation to siRNA production. Involved in the maintenance of post-transcriptional RNA silencing. The chain is DNA-directed RNA polymerase V subunit 1 (NRPE1) from Arabidopsis thaliana (Mouse-ear cress).